The sequence spans 235 residues: Endonuclease V (235 aa).

Mg(2+) is bound by residues Asp47 and Asp115.

Belongs to the endonuclease V family. The cofactor is Mg(2+).

Its subcellular location is the cytoplasm. The catalysed reaction is Endonucleolytic cleavage at apurinic or apyrimidinic sites to products with a 5'-phosphate.. DNA repair enzyme involved in the repair of deaminated bases. Selectively cleaves double-stranded DNA at the second phosphodiester bond 3' to a deoxyinosine leaving behind the intact lesion on the nicked DNA. The polypeptide is Endonuclease V (Myxococcus xanthus (strain DK1622)).